The following is a 240-amino-acid chain: Adenosylcobinamide-GDP ribazoletransferase (240 aa).

5 helical membrane passes run 31–51 (LLYY…ASHL), 62–81 (ALLL…DGLA), 109–129 (IAVV…WVLV), 133–153 (IGAQ…GLFL), and 179–199 (VLLV…LLAL).

The protein belongs to the CobS family. The cofactor is Mg(2+).

It is found in the cell inner membrane. It carries out the reaction alpha-ribazole + adenosylcob(III)inamide-GDP = adenosylcob(III)alamin + GMP + H(+). It catalyses the reaction alpha-ribazole 5'-phosphate + adenosylcob(III)inamide-GDP = adenosylcob(III)alamin 5'-phosphate + GMP + H(+). The protein operates within cofactor biosynthesis; adenosylcobalamin biosynthesis; adenosylcobalamin from cob(II)yrinate a,c-diamide: step 7/7. In terms of biological role, joins adenosylcobinamide-GDP and alpha-ribazole to generate adenosylcobalamin (Ado-cobalamin). Also synthesizes adenosylcobalamin 5'-phosphate from adenosylcobinamide-GDP and alpha-ribazole 5'-phosphate. The polypeptide is Adenosylcobinamide-GDP ribazoletransferase (Pseudomonas putida (strain ATCC 700007 / DSM 6899 / JCM 31910 / BCRC 17059 / LMG 24140 / F1)).